Here is a 178-residue protein sequence, read N- to C-terminus: ATP synthase subunit delta (178 aa).

The protein belongs to the ATPase delta chain family. F-type ATPases have 2 components, F(1) - the catalytic core - and F(0) - the membrane proton channel. F(1) has five subunits: alpha(3), beta(3), gamma(1), delta(1), epsilon(1). F(0) has three main subunits: a(1), b(2) and c(10-14). The alpha and beta chains form an alternating ring which encloses part of the gamma chain. F(1) is attached to F(0) by a central stalk formed by the gamma and epsilon chains, while a peripheral stalk is formed by the delta and b chains.

The protein resides in the cell membrane. In terms of biological role, f(1)F(0) ATP synthase produces ATP from ADP in the presence of a proton or sodium gradient. F-type ATPases consist of two structural domains, F(1) containing the extramembraneous catalytic core and F(0) containing the membrane proton channel, linked together by a central stalk and a peripheral stalk. During catalysis, ATP synthesis in the catalytic domain of F(1) is coupled via a rotary mechanism of the central stalk subunits to proton translocation. Functionally, this protein is part of the stalk that links CF(0) to CF(1). It either transmits conformational changes from CF(0) to CF(1) or is implicated in proton conduction. This is ATP synthase subunit delta from Geobacillus stearothermophilus (Bacillus stearothermophilus).